Reading from the N-terminus, the 286-residue chain is Bifunctional protein FolD (286 aa).

NADP(+) contacts are provided by residues 165 to 167, Ser190, and Val231; that span reads GRS.

The protein belongs to the tetrahydrofolate dehydrogenase/cyclohydrolase family. Homodimer.

The catalysed reaction is (6R)-5,10-methylene-5,6,7,8-tetrahydrofolate + NADP(+) = (6R)-5,10-methenyltetrahydrofolate + NADPH. It catalyses the reaction (6R)-5,10-methenyltetrahydrofolate + H2O = (6R)-10-formyltetrahydrofolate + H(+). It functions in the pathway one-carbon metabolism; tetrahydrofolate interconversion. Its function is as follows. Catalyzes the oxidation of 5,10-methylenetetrahydrofolate to 5,10-methenyltetrahydrofolate and then the hydrolysis of 5,10-methenyltetrahydrofolate to 10-formyltetrahydrofolate. The polypeptide is Bifunctional protein FolD (Bacillus cereus (strain G9842)).